Consider the following 480-residue polypeptide: Aspartyl/glutamyl-tRNA(Asn/Gln) amidotransferase subunit B (480 aa).

It belongs to the GatB/GatE family. GatB subfamily. As to quaternary structure, heterotrimer of A, B and C subunits.

The catalysed reaction is L-glutamyl-tRNA(Gln) + L-glutamine + ATP + H2O = L-glutaminyl-tRNA(Gln) + L-glutamate + ADP + phosphate + H(+). The enzyme catalyses L-aspartyl-tRNA(Asn) + L-glutamine + ATP + H2O = L-asparaginyl-tRNA(Asn) + L-glutamate + ADP + phosphate + 2 H(+). Allows the formation of correctly charged Asn-tRNA(Asn) or Gln-tRNA(Gln) through the transamidation of misacylated Asp-tRNA(Asn) or Glu-tRNA(Gln) in organisms which lack either or both of asparaginyl-tRNA or glutaminyl-tRNA synthetases. The reaction takes place in the presence of glutamine and ATP through an activated phospho-Asp-tRNA(Asn) or phospho-Glu-tRNA(Gln). The chain is Aspartyl/glutamyl-tRNA(Asn/Gln) amidotransferase subunit B from Caldicellulosiruptor saccharolyticus (strain ATCC 43494 / DSM 8903 / Tp8T 6331).